Consider the following 479-residue polypeptide: Nucleoside-diphosphatase uda-1 (479 aa).

Residues 1-7 (MLFPAFS) lie on the Cytoplasmic side of the membrane. A helical; Signal-anchor for type II membrane protein transmembrane segment spans residues 8-24 (ILLISFFSLLSVVTTKT). Residues 25–479 (QYWCHGDGVL…VLSYFNIISV (455 aa)) are Lumenal-facing. E171 (proton acceptor) is an active-site residue. N-linked (GlcNAc...) asparagine glycans are attached at residues N300 and N452.

This sequence belongs to the GDA1/CD39 NTPase family. Ca(2+) serves as cofactor. Requires Mg(2+) as cofactor. Mn(2+) is required as a cofactor.

The protein localises to the endomembrane system. The enzyme catalyses a ribonucleoside 5'-diphosphate + H2O = a ribonucleoside 5'-phosphate + phosphate + H(+). Hydrolyzes UDP and GDP but not any other nucleoside di-, mono- or triphosphates. May promote reglycosylation reactions involved in glycoproteins folding and quality control in the endoplasmic reticulum. The polypeptide is Nucleoside-diphosphatase uda-1 (uda-1) (Caenorhabditis elegans).